Reading from the N-terminus, the 342-residue chain is Biotin synthase (342 aa).

Positions 63 to 288 (PEVEVEGIIS…RTMLRFAGGR (226 aa)) constitute a Radical SAM core domain. Residues C78, C82, and C85 each coordinate [4Fe-4S] cluster. [2Fe-2S] cluster is bound by residues C121, C154, C213, and R283.

The protein belongs to the radical SAM superfamily. Biotin synthase family. Homodimer. [4Fe-4S] cluster is required as a cofactor. [2Fe-2S] cluster serves as cofactor.

The catalysed reaction is (4R,5S)-dethiobiotin + (sulfur carrier)-SH + 2 reduced [2Fe-2S]-[ferredoxin] + 2 S-adenosyl-L-methionine = (sulfur carrier)-H + biotin + 2 5'-deoxyadenosine + 2 L-methionine + 2 oxidized [2Fe-2S]-[ferredoxin]. The protein operates within cofactor biosynthesis; biotin biosynthesis; biotin from 7,8-diaminononanoate: step 2/2. Its function is as follows. Catalyzes the conversion of dethiobiotin (DTB) to biotin by the insertion of a sulfur atom into dethiobiotin via a radical-based mechanism. The polypeptide is Biotin synthase (Mycobacteroides abscessus (strain ATCC 19977 / DSM 44196 / CCUG 20993 / CIP 104536 / JCM 13569 / NCTC 13031 / TMC 1543 / L948) (Mycobacterium abscessus)).